We begin with the raw amino-acid sequence, 170 residues long: Acetyl-CoA decarbonylase/synthase complex subunit epsilon 2 (170 aa).

Belongs to the CdhB family. As to quaternary structure, heterotetramer of two alpha and two epsilon subunits. The ACDS complex is made up of alpha, epsilon, beta, gamma and delta subunits with a probable stoichiometry of (alpha(2)epsilon(2))(4)-beta(8)-(gamma(1)delta(1))(8).

It participates in one-carbon metabolism; methanogenesis from acetate. Part of a complex that catalyzes the reversible cleavage of acetyl-CoA, allowing growth on acetate as sole source of carbon and energy. The alpha-epsilon subcomponent functions as a carbon monoxide dehydrogenase. The precise role of the epsilon subunit is unclear; it may have a stabilizing role within the alpha(2)epsilon(2) component and/or be involved in electron transfer to FAD during a potential FAD-mediated CO oxidation. The sequence is that of Acetyl-CoA decarbonylase/synthase complex subunit epsilon 2 (cdhB2) from Methanosarcina mazei (strain ATCC BAA-159 / DSM 3647 / Goe1 / Go1 / JCM 11833 / OCM 88) (Methanosarcina frisia).